The sequence spans 427 residues: UPF0761 membrane protein Plut_1323 (427 aa).

The next 6 membrane-spanning stretches (helical) occupy residues 51–71, 105–125, 147–167, 188–208, 221–241, and 251–271; these read LLSI…FAVF, TFTM…VLIS, FTLY…SLAA, LLSL…YLLV, GALV…FYVA, and GALS…VVVL.

It belongs to the UPF0761 family.

Its subcellular location is the cell inner membrane. The sequence is that of UPF0761 membrane protein Plut_1323 from Chlorobium luteolum (strain DSM 273 / BCRC 81028 / 2530) (Pelodictyon luteolum).